A 633-amino-acid chain; its full sequence is Extracellular metalloproteinase 3 (633 aa).

An N-terminal signal peptide occupies residues 1–18 (MHGLLLAGLLALPMNVLA). Residues 19 to 246 (HPAEQHASNV…VHNVVDYVAS (228 aa)) constitute a propeptide that is removed on maturation. A glycan (N-linked (GlcNAc...) asparagine) is linked at asparagine 410. A Zn(2+)-binding site is contributed by histidine 429. Glutamate 430 is an active-site residue. Zn(2+) is bound at residue histidine 433. Asparagine 480 and asparagine 622 each carry an N-linked (GlcNAc...) asparagine glycan.

Belongs to the peptidase M36 family. Zn(2+) is required as a cofactor.

The protein resides in the secreted. Secreted metalloproteinase probably acting as a virulence factor. In Trichophyton tonsurans (Scalp ringworm fungus), this protein is Extracellular metalloproteinase 3 (MEP3).